A 206-amino-acid chain; its full sequence is 3-demethoxyubiquinol 3-hydroxylase (206 aa).

Residues Glu-55, Glu-85, His-88, Glu-137, Glu-169, and His-172 each contribute to the Fe cation site.

The protein belongs to the COQ7 family. Fe cation serves as cofactor.

The protein localises to the cell membrane. It catalyses the reaction a 5-methoxy-2-methyl-3-(all-trans-polyprenyl)benzene-1,4-diol + AH2 + O2 = a 3-demethylubiquinol + A + H2O. The protein operates within cofactor biosynthesis; ubiquinone biosynthesis. Its function is as follows. Catalyzes the hydroxylation of 2-nonaprenyl-3-methyl-6-methoxy-1,4-benzoquinol during ubiquinone biosynthesis. This Chromobacterium violaceum (strain ATCC 12472 / DSM 30191 / JCM 1249 / CCUG 213 / NBRC 12614 / NCIMB 9131 / NCTC 9757 / MK) protein is 3-demethoxyubiquinol 3-hydroxylase.